We begin with the raw amino-acid sequence, 199 residues long: Ribonuclease HII (199 aa).

Residues 12–199 (DLLAGTDEAG…FGPVKKILEG (188 aa)) form the RNase H type-2 domain. Residues D18, E19, and D110 each contribute to the a divalent metal cation site.

Belongs to the RNase HII family. Mn(2+) is required as a cofactor. It depends on Mg(2+) as a cofactor.

The protein localises to the cytoplasm. The catalysed reaction is Endonucleolytic cleavage to 5'-phosphomonoester.. Endonuclease that specifically degrades the RNA of RNA-DNA hybrids. This chain is Ribonuclease HII, found in Marinomonas sp. (strain MWYL1).